The primary structure comprises 65 residues: Large ribosomal subunit protein uL29 (65 aa).

It belongs to the universal ribosomal protein uL29 family.

The sequence is that of Large ribosomal subunit protein uL29 from Xylella fastidiosa (strain Temecula1 / ATCC 700964).